The sequence spans 531 residues: T-complex protein 1 subunit zeta (531 aa).

At Ala-2 the chain carries N-acetylalanine. Residue Lys-5 is modified to N6-acetyllysine. Gly-39 is a binding site for ADP. Gly-39 contacts ATP. Mg(2+) is bound at residue Asp-90. Residues Gly-91, Thr-92, Thr-93, Ser-94, Thr-158, and Lys-159 each contribute to the ADP site. Residues Gly-91, Thr-92, and Thr-93 each contribute to the ATP site. At Lys-199 the chain carries N6-acetyllysine. Ser-205 is subject to Phosphoserine. Lys-251 is covalently cross-linked (Glycyl lysine isopeptide (Lys-Gly) (interchain with G-Cter in SUMO2)). An N6-acetyllysine mark is found at Lys-287, Lys-365, Lys-377, and Lys-388. Ala-411 is an ADP binding site. Positions 411, 412, 496, and 501 each coordinate ATP. Asp-496 is a binding site for ADP.

The protein belongs to the TCP-1 chaperonin family. As to quaternary structure, component of the chaperonin-containing T-complex (TRiC), a hexadecamer composed of two identical back-to-back stacked rings enclosing a protein folding chamber. Each ring is made up of eight different subunits: TCP1/CCT1, CCT2, CCT3, CCT4, CCT5, CCT6A/CCT6, CCT7, CCT8. Interacts with PACRG.

Its subcellular location is the cytoplasm. The catalysed reaction is ATP + H2O = ADP + phosphate + H(+). In terms of biological role, component of the chaperonin-containing T-complex (TRiC), a molecular chaperone complex that assists the folding of actin, tubulin and other proteins upon ATP hydrolysis. The TRiC complex mediates the folding of WRAP53/TCAB1, thereby regulating telomere maintenance. This is T-complex protein 1 subunit zeta (CCT6A) from Homo sapiens (Human).